A 358-amino-acid chain; its full sequence is Mannonate dehydratase (358 aa).

Belongs to the mannonate dehydratase family. Requires Fe(2+) as cofactor. Mn(2+) serves as cofactor.

The enzyme catalyses D-mannonate = 2-dehydro-3-deoxy-D-gluconate + H2O. The protein operates within carbohydrate metabolism; pentose and glucuronate interconversion. In terms of biological role, catalyzes the dehydration of D-mannonate. This chain is Mannonate dehydratase, found in Lactococcus lactis subsp. cremoris (strain MG1363).